A 462-amino-acid chain; its full sequence is A-type ATP synthase subunit B (462 aa).

This sequence belongs to the ATPase alpha/beta chains family. As to quaternary structure, has multiple subunits with at least A(3), B(3), C, D, E, F, H, I and proteolipid K(x).

Its subcellular location is the cell membrane. Its function is as follows. Component of the A-type ATP synthase that produces ATP from ADP in the presence of a proton gradient across the membrane. The B chain is a regulatory subunit. This chain is A-type ATP synthase subunit B, found in Methanococcus maripaludis (strain C5 / ATCC BAA-1333).